The chain runs to 406 residues: Calreticulin (406 aa).

The N-terminal stretch at 1 to 17 (MMWCKTVIVLLATVGFI) is a signal peptide. A disulfide bridge connects residues C105 and C137. Positions 109, 111, 128, and 135 each coordinate an alpha-D-glucoside. 7 tandem repeats follow at residues 191–202 (VESGNLEDDWDF), 210–221 (DPTATKPEDWDD), 227–238 (DPDDKKPEDWDK), 244–255 (DPDATKPEDWDD), 259–269 (GEWEPPMIDNP), 273–283 (GEWQPKQLDNP), and 287–297 (GAWEHPEIANP). A 4 X approximate repeats region spans residues 191 to 255 (VESGNLEDDW…DATKPEDWDD (65 aa)). Residues 207–251 (KIKDPTATKPEDWDDRATIPDPDDKKPEDWDKPEHIPDPDATKPE) show a composition bias toward basic and acidic residues. The segment at 207–259 (KIKDPTATKPEDWDDRATIPDPDDKKPEDWDKPEHIPDPDATKPEDWDDEMDG) is disordered. The 3 X approximate repeats stretch occupies residues 259 to 297 (GEWEPPMIDNPEFKGEWQPKQLDNPNYKGAWEHPEIANP). Residue D317 participates in an alpha-D-glucoside binding. Residues 347-406 (KNTQAGEKKMKEAQDEVQRKKDEEEAKKASDKDDEDEDDDDEEKDDESKQDKDQSEHDEL) are disordered. The span at 352–377 (GEKKMKEAQDEVQRKKDEEEAKKASD) shows a compositional bias: basic and acidic residues. The segment covering 378-391 (KDDEDEDDDDEEKD) has biased composition (acidic residues). A compositionally biased stretch (basic and acidic residues) spans 392 to 406 (DESKQDKDQSEHDEL).

Belongs to the calreticulin family.

Its subcellular location is the endoplasmic reticulum lumen. Its function is as follows. Molecular calcium-binding chaperone promoting folding, oligomeric assembly and quality control in the ER via the calreticulin/calnexin cycle. This lectin may interact transiently with almost all of the monoglucosylated glycoproteins that are synthesized in the ER. This chain is Calreticulin, found in Drosophila melanogaster (Fruit fly).